We begin with the raw amino-acid sequence, 2161 residues long: DNA polymerase epsilon catalytic subunit A (2161 aa).

Short sequence motifs (nuclear localization signal) lie at residues 5–12, 1137–1144, and 1239–1246; these read NRRRDRKD, HKKVREKD, and LKKRKWKV. 4 residues coordinate Zn(2+): Cys2038, Cys2041, Cys2063, and Cys2068. A CysA-type zinc finger spans residues 2038–2068; that stretch reads CSNCDAYRDLDICRDPALLTEKEWSCADTQC. [4Fe-4S] cluster is bound by residues Cys2099, Cys2102, Cys2114, and Cys2116. A CysB motif motif is present at residues 2099–2116; the sequence is CIRCNQVKAAHLTEQCEC. The Nuclear localization signal 4 motif lies at 2130-2137; it reads SKRMEIFM.

It belongs to the DNA polymerase type-B family. Heterotetramer. Subunit of the DNA polymerase II. Interacts (via C-terminus) with DPB2. Interacts with LHP1/TFL2. It depends on [4Fe-4S] cluster as a cofactor. Mostly expressed at low levels in inflorescence (floral meristem and flowers until anthesis), and, to a lower extent, in roots, seeds and leaves.

It is found in the nucleus. It carries out the reaction DNA(n) + a 2'-deoxyribonucleoside 5'-triphosphate = DNA(n+1) + diphosphate. DNA polymerase II, which participates in chromosomal DNA replication. Required for the timing and determination of cell fate during plant embryogenesis and root pole development, by promoting cell cycle and cell type patterning. Necessary for proper shoot (SAM) and root apical meristem (RAM) functions. Involved in maintaining epigenetic states, controlling hypersensitive response (HR), and mediating abscisic acid (ABA) signaling. Required for flowering repression through a mechanism involving epigenetic gene silencing. May participate in processes involved in chromatin-mediated cellular memory. The protein is DNA polymerase epsilon catalytic subunit A (POL2A) of Arabidopsis thaliana (Mouse-ear cress).